Here is a 399-residue protein sequence, read N- to C-terminus: Succinyl-diaminopimelate desuccinylase (399 aa).

His-80 contributes to the Zn(2+) binding site. Asp-82 is a catalytic residue. Position 113 (Asp-113) interacts with Zn(2+). Catalysis depends on Glu-147, which acts as the Proton acceptor. Zn(2+) contacts are provided by Glu-148, Glu-176, and His-366.

Belongs to the peptidase M20A family. DapE subfamily. As to quaternary structure, homodimer. Zn(2+) serves as cofactor. Co(2+) is required as a cofactor.

It catalyses the reaction N-succinyl-(2S,6S)-2,6-diaminopimelate + H2O = (2S,6S)-2,6-diaminopimelate + succinate. Its pathway is amino-acid biosynthesis; L-lysine biosynthesis via DAP pathway; LL-2,6-diaminopimelate from (S)-tetrahydrodipicolinate (succinylase route): step 3/3. In terms of biological role, catalyzes the hydrolysis of N-succinyl-L,L-diaminopimelic acid (SDAP), forming succinate and LL-2,6-diaminopimelate (DAP), an intermediate involved in the bacterial biosynthesis of lysine and meso-diaminopimelic acid, an essential component of bacterial cell walls. The polypeptide is Succinyl-diaminopimelate desuccinylase (Colwellia psychrerythraea (strain 34H / ATCC BAA-681) (Vibrio psychroerythus)).